Here is a 68-residue protein sequence, read N- to C-terminus: Non-disulfide-bridged peptide 5.6 (68 aa).

Positions 1-23 (MKTQVIIFIMAVVFLQLLSQSEA) are cleaved as a signal peptide. A propeptide spanning residues 37–68 (ELRNIDLDQFDDMFDEPEISAADMRFLQELLK) is cleaved from the precursor.

This sequence belongs to the non-disulfide-bridged peptide (NDBP) superfamily. Short antimicrobial peptide (group 4) family. Expressed by the venom gland.

It localises to the secreted. The protein localises to the target cell membrane. Functionally, antibacterial peptide with activity against both Gram-positive and Gram-negative bacteria probably by forming pores in the cell membrane. Also has weak hemolytic activity. Does not show antifungal activity. The chain is Non-disulfide-bridged peptide 5.6 from Hoffmannihadrurus gertschi (Scorpion).